The primary structure comprises 526 residues: Tyrosine-protein kinase transforming protein Src (526 aa).

Positions 1-57 (MGSSKSKPKDPSQRRCSLEPPDSTHHGGFPASQTPNKTAAPDTHRTPSRSFGTVATE) are disordered. G2 carries N-myristoyl glycine; by host lipidation. The segment covering 7 to 25 (KPKDPSQRRCSLEPPDSTH) has biased composition (basic and acidic residues). In terms of domain architecture, SH3 spans 81–142 (GGVTTFVALY…PSNYVAPSDS (62 aa)). The 98-residue stretch at 148–245 (WYFGKITRRE…GLCHRLTNVC (98 aa)) folds into the SH2 domain. One can recognise a Protein kinase domain in the interval 267–517 (LRLEVKLGQG…TFEYLQAQLL (251 aa)). ATP is bound by residues 273-281 (LGQGCFGEV) and K295. The active-site Proton acceptor is the D386. Residue Y416 is modified to Phosphotyrosine; by autocatalysis.

This sequence belongs to the protein kinase superfamily. Tyr protein kinase family. SRC subfamily. Post-translationally, the phosphorylated form is termed pp60v-src.

The catalysed reaction is L-tyrosyl-[protein] + ATP = O-phospho-L-tyrosyl-[protein] + ADP + H(+). In terms of biological role, this phosphoprotein, required for both the initiation and the maintenance of neoplastic transformation, is a protein kinase that catalyzes the phosphorylation of tyrosine residues in vitro. The sequence is that of Tyrosine-protein kinase transforming protein Src (V-SRC) from Galliformes.